The following is a 525-amino-acid chain: Arylsulfatase G (525 aa).

Residues 1–16 form the signal peptide; that stretch reads MGWLFLKVLLVGMAFS. Aspartate 44, aspartate 45, and cysteine 84 together coordinate Ca(2+). Cysteine 84 serves as the catalytic Nucleophile. Residue cysteine 84 is modified to 3-oxoalanine (Cys). Residue asparagine 117 is glycosylated (N-linked (GlcNAc...) asparagine). Residue lysine 137 coordinates substrate. The active site involves histidine 139. Serine 162 provides a ligand contact to substrate. N-linked (GlcNAc...) asparagine glycosylation occurs at asparagine 215. Substrate is bound at residue histidine 251. Aspartate 302 and asparagine 303 together coordinate Ca(2+). Residues asparagine 356 and asparagine 497 are each glycosylated (N-linked (GlcNAc...) asparagine).

This sequence belongs to the sulfatase family. The cofactor is Ca(2+). Post-translationally, N-glycosylated with both high mannose and complex type sugars. In terms of processing, the conversion to 3-oxoalanine (also known as C-formylglycine, FGly), of a serine or cysteine residue in prokaryotes and of a cysteine residue in eukaryotes, is critical for catalytic activity. The 63-kDa precursor undergoes proteolytic processing in two steps, yielding two fragments in the first step (apparent molecular masses of 44 and 18 kDa). In the second step, the 44-kDa fragment is processed further to the 34- and 10-kDa chains. The 10-kDa chain is a cleavage product of the 44-kDa fragment but linked to the 18-kDa chain through a disulfide bridge. Highly expressed in the spleen, kidney, liver, brain, and testis (at protein level).

It is found in the lysosome. The catalysed reaction is an aryl sulfate + H2O = a phenol + sulfate + H(+). It carries out the reaction Hydrolysis of the 3-sulfate groups of the N-sulfo-D-glucosamine 3-O-sulfate units of heparin.. Its function is as follows. Displays arylsulfatase activity at acidic pH towards the artificial substrate p-nitrocatechol sulfate. Catalyzes the hydrolysis of the 3-sulfate groups of the N-sulfo-D-glucosamine 3-O-sulfate units of heparin. The protein is Arylsulfatase G (Arsg) of Mus musculus (Mouse).